A 336-amino-acid polypeptide reads, in one-letter code: N-acetyl-gamma-glutamyl-phosphate reductase (336 aa).

Cysteine 144 is a catalytic residue.

This sequence belongs to the NAGSA dehydrogenase family. Type 1 subfamily.

The protein localises to the cytoplasm. The catalysed reaction is N-acetyl-L-glutamate 5-semialdehyde + phosphate + NADP(+) = N-acetyl-L-glutamyl 5-phosphate + NADPH + H(+). The protein operates within amino-acid biosynthesis; L-arginine biosynthesis; N(2)-acetyl-L-ornithine from L-glutamate: step 3/4. Its function is as follows. Catalyzes the NADPH-dependent reduction of N-acetyl-5-glutamyl phosphate to yield N-acetyl-L-glutamate 5-semialdehyde. This is N-acetyl-gamma-glutamyl-phosphate reductase from Methanosarcina acetivorans (strain ATCC 35395 / DSM 2834 / JCM 12185 / C2A).